The sequence spans 197 residues: Lactoylglutathione lyase-like protein terB (197 aa).

An N-terminal signal peptide occupies residues 1-19; that stretch reads MARFAVLQLLLPLAAGLTG. N-linked (GlcNAc...) asparagine glycosylation is found at N82, N99, and N140.

It belongs to the glyoxalase I family.

Lactoylglutathione lyase-like protein; part of the gene cluster that mediates the biosynthesis of terrein, a fungal metabolite with ecological, antimicrobial, antiproliferative, and antioxidative activities. The first step in the pathway is performed by the polyketide synthase terA that produces 4-hydroxy-6-methylpyranon (4-HMP), orsellinic acid (OA), and 2,3-dehydro-6-hydroxymellein (2,3-dehydro-6-HM) by condensing acetyl-CoA with two, three, or four malonyl-CoA units, respectively. 4-HMP and OA are not pathway intermediates, but are rather shunt or side products. 2,3-dehydro-6-HM is further converted to 6-hydroxymellein (6-HM) by the 6-hydroxymellein synthase terB. The monooxygenases terC and terD, the multicopper oxidase terE and the Kelch-like protein terF are then involved in the transformation of 6-HM to terrein. Even if they are co-regulated with the other terrein cluster genes, terH and terI seem to be dispensable for terrein production; whereas one or both of the 2 transporters terG and terJ are probably required for efficient secretion of metabolites. The protein is Lactoylglutathione lyase-like protein terB of Aspergillus terreus (strain NIH 2624 / FGSC A1156).